Reading from the N-terminus, the 167-residue chain is Protein archease (167 aa).

Ala2 bears the N-acetylalanine mark. Ca(2+)-binding residues include Asp39, Asp166, and Ile167.

This sequence belongs to the archease family. Component of the tRNA-splicing ligase complex.

Component of the tRNA-splicing ligase complex required to facilitate the enzymatic turnover of catalytic subunit RTCB. Together with DDX1, acts by facilitating the guanylylation of RTCB, a key intermediate step in tRNA ligation. This chain is Protein archease (ZBTB8OS), found in Bos taurus (Bovine).